Consider the following 36-residue polypeptide: Photosystem I reaction center subunit VIII (36 aa).

The helical transmembrane segment at 6–28 threads the bilayer; that stretch reads FPSVLVPLVGLVFPAMAMASLSL.

Belongs to the PsaI family.

The protein localises to the plastid. The protein resides in the chloroplast thylakoid membrane. Its function is as follows. May help in the organization of the PsaL subunit. In Panax ginseng (Korean ginseng), this protein is Photosystem I reaction center subunit VIII.